The following is a 1002-amino-acid chain: BTB/POZ domain-containing protein At1g04390 (1002 aa).

2 consecutive BTB domains span residues 680-758 (SDMR…EVES) and 808-889 (SDVI…PKPP).

The protein operates within protein modification; protein ubiquitination. May act as a substrate-specific adapter of an E3 ubiquitin-protein ligase complex (CUL3-RBX1-BTB) which mediates the ubiquitination and subsequent proteasomal degradation of target proteins. The protein is BTB/POZ domain-containing protein At1g04390 of Arabidopsis thaliana (Mouse-ear cress).